Here is a 193-residue protein sequence, read N- to C-terminus: Acyl carrier protein phosphodiesterase (193 aa).

It belongs to the AcpH family.

The catalysed reaction is holo-[ACP] + H2O = apo-[ACP] + (R)-4'-phosphopantetheine + H(+). In terms of biological role, converts holo-ACP to apo-ACP by hydrolytic cleavage of the phosphopantetheine prosthetic group from ACP. The protein is Acyl carrier protein phosphodiesterase of Escherichia coli O139:H28 (strain E24377A / ETEC).